Here is a 138-residue protein sequence, read N- to C-terminus: ATP synthase epsilon chain, chloroplastic (138 aa).

The protein belongs to the ATPase epsilon chain family. F-type ATPases have 2 components, CF(1) - the catalytic core - and CF(0) - the membrane proton channel. CF(1) has five subunits: alpha(3), beta(3), gamma(1), delta(1), epsilon(1). CF(0) has three main subunits: a, b and c.

The protein localises to the plastid. The protein resides in the chloroplast thylakoid membrane. Functionally, produces ATP from ADP in the presence of a proton gradient across the membrane. The polypeptide is ATP synthase epsilon chain, chloroplastic (Galdieria sulphuraria (Red alga)).